The chain runs to 389 residues: Succinate--CoA ligase [ADP-forming] subunit beta (389 aa).

The ATP-grasp domain maps to 9–236; that stretch reads RDMFEAHGVP…KDSADPLEAK (228 aa). ATP-binding positions include K45, 52-54, A94, and E99; that span reads GRG. 2 residues coordinate Mg(2+): N191 and D205. Substrate is bound by residues N256 and 318–320; that span reads GIT.

It belongs to the succinate/malate CoA ligase beta subunit family. As to quaternary structure, heterotetramer of two alpha and two beta subunits. The cofactor is Mg(2+).

The enzyme catalyses succinate + ATP + CoA = succinyl-CoA + ADP + phosphate. It catalyses the reaction GTP + succinate + CoA = succinyl-CoA + GDP + phosphate. It participates in carbohydrate metabolism; tricarboxylic acid cycle; succinate from succinyl-CoA (ligase route): step 1/1. Succinyl-CoA synthetase functions in the citric acid cycle (TCA), coupling the hydrolysis of succinyl-CoA to the synthesis of either ATP or GTP and thus represents the only step of substrate-level phosphorylation in the TCA. The beta subunit provides nucleotide specificity of the enzyme and binds the substrate succinate, while the binding sites for coenzyme A and phosphate are found in the alpha subunit. This Renibacterium salmoninarum (strain ATCC 33209 / DSM 20767 / JCM 11484 / NBRC 15589 / NCIMB 2235) protein is Succinate--CoA ligase [ADP-forming] subunit beta.